The chain runs to 273 residues: Urease accessory protein UreD (273 aa).

Belongs to the UreD family. In terms of assembly, ureD, UreF and UreG form a complex that acts as a GTP-hydrolysis-dependent molecular chaperone, activating the urease apoprotein by helping to assemble the nickel containing metallocenter of UreC. The UreE protein probably delivers the nickel.

The protein localises to the cytoplasm. Its function is as follows. Required for maturation of urease via the functional incorporation of the urease nickel metallocenter. This Bacillus cereus (strain ATCC 10987 / NRS 248) protein is Urease accessory protein UreD.